A 341-amino-acid chain; its full sequence is Farnesyl pyrophosphate synthase 2 (341 aa).

Isopentenyl diphosphate is bound by residues Lys46, Arg49, and Gln85. Mg(2+) is bound by residues Asp92 and Asp96. Residue Arg101 coordinates dimethylallyl diphosphate. Arg102 serves as a coordination point for isopentenyl diphosphate. Dimethylallyl diphosphate is bound by residues Lys189, Thr190, Gln228, Lys245, and Lys254.

It belongs to the FPP/GGPP synthase family. The cofactor is Mg(2+). In terms of tissue distribution, mainly expressed in trichomes, roots and flowers, and, to a lower extent, in leaves and stems.

It localises to the cytoplasm. It is found in the nucleus. It catalyses the reaction isopentenyl diphosphate + dimethylallyl diphosphate = (2E)-geranyl diphosphate + diphosphate. It carries out the reaction isopentenyl diphosphate + (2E)-geranyl diphosphate = (2E,6E)-farnesyl diphosphate + diphosphate. It participates in isoprenoid biosynthesis; farnesyl diphosphate biosynthesis; farnesyl diphosphate from geranyl diphosphate and isopentenyl diphosphate: step 1/1. The protein operates within sesquiterpene biosynthesis. It functions in the pathway isoprenoid biosynthesis; geranyl diphosphate biosynthesis; geranyl diphosphate from dimethylallyl diphosphate and isopentenyl diphosphate: step 1/1. Catalyzes the sequential condensation of isopentenyl pyrophosphate with the allylic pyrophosphates, dimethylallyl pyrophosphate, and then with the resultant geranylpyrophosphate to the ultimate product farnesyl pyrophosphate. The polypeptide is Farnesyl pyrophosphate synthase 2 (Cannabis sativa (Hemp)).